A 371-amino-acid polypeptide reads, in one-letter code: Histidinol-phosphate aminotransferase (371 aa).

At Lys-232 the chain carries N6-(pyridoxal phosphate)lysine.

It belongs to the class-II pyridoxal-phosphate-dependent aminotransferase family. Histidinol-phosphate aminotransferase subfamily. Homodimer. The cofactor is pyridoxal 5'-phosphate.

The catalysed reaction is L-histidinol phosphate + 2-oxoglutarate = 3-(imidazol-4-yl)-2-oxopropyl phosphate + L-glutamate. It participates in amino-acid biosynthesis; L-histidine biosynthesis; L-histidine from 5-phospho-alpha-D-ribose 1-diphosphate: step 7/9. This is Histidinol-phosphate aminotransferase from Methylibium petroleiphilum (strain ATCC BAA-1232 / LMG 22953 / PM1).